The primary structure comprises 551 residues: Protein GPR107 (551 aa).

The signal sequence occupies residues 1-33 (MAVRVPLGCTGSFCPRLLPLLALLELLVDPSLG). Residues 34-262 (RVHHLALKDD…YLSAGEIPLP (229 aa)) lie on the Extracellular side of the membrane. An N-linked (GlcNAc...) asparagine glycan is attached at N64. The segment at 127-183 (GVKVRSPPEAGKQLPEIVFSKDEKVPSRSQEPAVSSNPKDSKVQRTPDGSKAQRSTV) is disordered. Over residues 153–164 (SRSQEPAVSSNP) the composition is skewed to polar residues. An N-linked (GlcNAc...) asparagine glycan is attached at N209. The helical transmembrane segment at 263–283 (KLYVSMALLFFLSGTVWIHIL) threads the bilayer. Over 284–292 (RKRRNDVFK) the chain is Cytoplasmic. A helical membrane pass occupies residues 293-313 (IHWLMAALPFTKSLSLVFHAI). The Extracellular portion of the chain corresponds to 314-336 (DYHYISSQGFPIEGWAVVYYITH). Residues 337 to 357 (LLKGALLFITIALIGTGWAFI) form a helical membrane-spanning segment. The Cytoplasmic segment spans residues 358-367 (KHILSDKDKK). The helical transmembrane segment at 368 to 388 (IFMIVIPLQVLANVAYIIIES) threads the bilayer. At 389–401 (TEEGTTEYGLWKD) the chain is on the extracellular side. The chain crosses the membrane as a helical span at residues 402 to 422 (SLFLVDLLCCGAILFPVVWSI). Topologically, residues 423–443 (RHLQEASATDGKAAINLAKLK) are cytoplasmic. The helical transmembrane segment at 444-466 (LFRHYYVLIVCYIYFTRIIAFLL) threads the bilayer. Topologically, residues 467 to 475 (KFAVPFQWK) are extracellular. A helical membrane pass occupies residues 476–495 (WLYQLLDETATLVFFVLTGY). Residues 496–551 (KFRPASDNPYLQLSQEEDDLEMESVVTTSGVMENMKKVKKVSNGAVEPQGSWEGTA) lie on the Cytoplasmic side of the membrane.

Belongs to the LU7TM family. Cleaved by FURIN to yield two fragments that remain associated via a disulfide bond. As to expression, widely expressed. Not detected in the duodenum, nor in the exocrine pancreas.

Its subcellular location is the cell membrane. The protein resides in the golgi apparatus. It localises to the trans-Golgi network membrane. Functionally, has been proposed to act as a receptor for neuronostatin, a peptide derived from the somatostatin/SST precursor. Involved in blood sugar regulation through the induction of glucagon in response to low glucose. The chain is Protein GPR107 (Gpr107) from Rattus norvegicus (Rat).